We begin with the raw amino-acid sequence, 135 residues long: ATP synthase epsilon chain (135 aa).

It belongs to the ATPase epsilon chain family. In terms of assembly, F-type ATPases have 2 components, CF(1) - the catalytic core - and CF(0) - the membrane proton channel. CF(1) has five subunits: alpha(3), beta(3), gamma(1), delta(1), epsilon(1). CF(0) has three main subunits: a, b and c.

The protein resides in the cell inner membrane. Its function is as follows. Produces ATP from ADP in the presence of a proton gradient across the membrane. The polypeptide is ATP synthase epsilon chain (Bradyrhizobium sp. (strain ORS 278)).